The sequence spans 566 residues: Putative sensory transducer protein YvaQ (566 aa).

The N-terminal stretch at 1-31 is a signal peptide; sequence MRLTISRKFSLVFLTLILINLLVGGIGVLNM. Residues 74 to 110 adopt a coiled-coil conformation; it reads DKSKMDTLDQEMNQIMEDINQKLDNYEKTISTDKEQK. The helical transmembrane segment at 186-206 threads the bilayer; it reads IYTALLVAASILISIFIWLYI. In terms of domain architecture, HAMP spans 208–261; it reads RNIVKPIIRMKESANHIAEGDLSNDMEALNSKDELGDLNEALQKMVGNLRDIVG. A Methyl-accepting transducer domain is found at 280–530; that stretch reads ATNETRSGSK…ESAAGIEETF (251 aa). The stretch at 536 to 566 forms a coiled coil; that stretch reads SAHSMDQVLLNAEELEQLANELNEKMGQFTI.

This sequence belongs to the methyl-accepting chemotaxis (MCP) protein family.

It localises to the cell membrane. Functionally, chemotactic-signal transducers respond to changes in the concentration of attractants and repellents in the environment, transduce a signal from the outside to the inside of the cell, and facilitate sensory adaptation through the variation of the level of methylation. Attractants increase the level of methylation while repellents decrease the level of methylation. The chain is Putative sensory transducer protein YvaQ (yvaQ) from Bacillus subtilis (strain 168).